The sequence spans 299 residues: Apolipoprotein E (299 aa).

A signal peptide spans Met-1–Ala-18. 7 tandem repeats follow at residues Leu-74 to Ala-95, Pro-96 to Gly-117, Ala-118 to Gly-139, Gln-140 to Leu-161, Arg-162 to Glu-183, Arg-184 to Ala-205, and Gly-224 to Glu-245. The tract at residues Leu-74–Glu-245 is 8 X 22 AA approximate tandem repeats. Residue Met-137 is modified to Methionine sulfoxide. Residue Ser-141 is modified to Phosphoserine. The interval His-152–Arg-162 is LDL and other lipoprotein receptors binding. Residue Met-156–Arg-159 coordinates heparin. Residues Ser-204–Met-273 form a lipid-binding and lipoprotein association region. Residue Gly-219–Leu-226 coordinates heparin. The tract at residues Arg-261–Met-273 is specificity for association with VLDL.

Belongs to the apolipoprotein A1/A4/E family. Homotetramer. May interact with ABCA1; functionally associated with ABCA1 in the biogenesis of HDLs. May interact with APP/A4 amyloid-beta peptide; the interaction is extremely stable in vitro but its physiological significance is unclear. May interact with MAPT. May interact with MAP2. In the cerebrospinal fluid, interacts with secreted SORL1. Interacts with PMEL; this allows the loading of PMEL luminal fragment on ILVs to induce fibril nucleation. APOE exists as multiple glycosylated and sialylated glycoforms within cells and in plasma. The extent of glycosylation and sialylation are tissue and context specific. Post-translationally, glycated in plasma VLDL. In terms of processing, phosphorylated by FAM20C in the extracellular medium.

The protein resides in the secreted. It is found in the extracellular space. It localises to the extracellular matrix. Its subcellular location is the extracellular vesicle. The protein localises to the endosome. The protein resides in the multivesicular body. APOE is an apolipoprotein, a protein associating with lipid particles, that mainly functions in lipoprotein-mediated lipid transport between organs via the plasma and interstitial fluids. APOE is a core component of plasma lipoproteins and is involved in their production, conversion and clearance. Apolipoproteins are amphipathic molecules that interact both with lipids of the lipoprotein particle core and the aqueous environment of the plasma. As such, APOE associates with chylomicrons, chylomicron remnants, very low density lipoproteins (VLDL) and intermediate density lipoproteins (IDL) but shows a preferential binding to high-density lipoproteins (HDL). It also binds a wide range of cellular receptors including the LDL receptor/LDLR, the LDL receptor-related proteins LRP1, LRP2 and LRP8 and the very low-density lipoprotein receptor/VLDLR that mediate the cellular uptake of the APOE-containing lipoprotein particles. Finally, APOE also has a heparin-binding activity and binds heparan-sulfate proteoglycans on the surface of cells, a property that supports the capture and the receptor-mediated uptake of APOE-containing lipoproteins by cells. A main function of APOE is to mediate lipoprotein clearance through the uptake of chylomicrons, VLDLs, and HDLs by hepatocytes. APOE is also involved in the biosynthesis by the liver of VLDLs as well as their uptake by peripheral tissues ensuring the delivery of triglycerides and energy storage in muscle, heart and adipose tissues. By participating in the lipoprotein-mediated distribution of lipids among tissues, APOE plays a critical role in plasma and tissues lipid homeostasis. APOE is also involved in two steps of reverse cholesterol transport, the HDLs-mediated transport of cholesterol from peripheral tissues to the liver, and thereby plays an important role in cholesterol homeostasis. First, it is functionally associated with ABCA1 in the biogenesis of HDLs in tissues. Second, it is enriched in circulating HDLs and mediates their uptake by hepatocytes. APOE also plays an important role in lipid transport in the central nervous system, regulating neuron survival and sprouting. This Erethizon dorsatum (North American porcupine) protein is Apolipoprotein E (APOE).